A 146-amino-acid polypeptide reads, in one-letter code: Anti-sigma F factor (146 aa).

The protein belongs to the anti-sigma-factor family.

The catalysed reaction is L-seryl-[protein] + ATP = O-phospho-L-seryl-[protein] + ADP + H(+). It catalyses the reaction L-threonyl-[protein] + ATP = O-phospho-L-threonyl-[protein] + ADP + H(+). In terms of biological role, binds to sigma F and blocks its ability to form an RNA polymerase holoenzyme (E-sigma F). Phosphorylates SpoIIAA on a serine residue. This phosphorylation may enable SpoIIAA to act as an anti-anti-sigma factor that counteracts SpoIIAB and thus releases sigma F from inhibition. This is Anti-sigma F factor from Shouchella clausii (strain KSM-K16) (Alkalihalobacillus clausii).